The sequence spans 87 residues: Putative regulatory protein GWCH70_1057 (87 aa).

The protein belongs to the RemA family.

This is Putative regulatory protein GWCH70_1057 from Geobacillus sp. (strain WCH70).